The primary structure comprises 136 residues: Histone H2B.5 (136 aa).

Residues 1 to 36 (MAPKAEKKPAAEKKPVETEKKPKAEKRVPGKDGGAD) show a composition bias toward basic and acidic residues. Residues 1–44 (MAPKAEKKPAAEKKPVETEKKPKAEKRVPGKDGGADKKKKKAKK) form a disordered region. N6-acetyllysine is present on residues K7 and K26. K132 participates in a covalent cross-link: Glycyl lysine isopeptide (Lys-Gly) (interchain with G-Cter in ubiquitin).

This sequence belongs to the histone H2B family. The nucleosome is a histone octamer containing two molecules each of H2A, H2B, H3 and H4 assembled in one H3-H4 heterotetramer and two H2A-H2B heterodimers. The octamer wraps approximately 147 bp of DNA. Can be acetylated to form H2BK6ac and H2BK33ac. In terms of processing, monoubiquitinated to form H2BK143ub1; may give a specific tag for epigenetic transcriptional activation.

The protein resides in the nucleus. It localises to the chromosome. Functionally, core component of nucleosome. Nucleosomes wrap and compact DNA into chromatin, limiting DNA accessibility to the cellular machineries which require DNA as a template. Histones thereby play a central role in transcription regulation, DNA repair, DNA replication and chromosomal stability. DNA accessibility is regulated via a complex set of post-translational modifications of histones, also called histone code, and nucleosome remodeling. The protein is Histone H2B.5 of Triticum aestivum (Wheat).